The following is a 405-amino-acid chain: Protein lin-11 (405 aa).

Residues K17 and K18 each participate in a glycyl lysine isopeptide (Lys-Gly) (interchain with G-Cter in SUMO) cross-link. LIM zinc-binding domains are found at residues 68–124 (CAAC…RRYS) and 127–187 (CAGC…TATK). Polar residues predominate over residues 189–205 (STPTSIHRPVSNGSECN). Disordered stretches follow at residues 189-208 (STPT…NSDV) and 224-246 (GEGD…GPRT). Residues 241–300 (RRGPRTTIKAKQLETLKNAFAATPKPTRHIREQLAAETGLNMRVIQVWFQNRRSKERRMK) constitute a DNA-binding region (homeobox).

In terms of tissue distribution, expressed in ADL, AVJL, AIZL, RICL, RIF and AVG neurons.

The protein localises to the nucleus. In terms of biological role, probable transcription factor which is required for asymmetric division of vulval blast cells. Involved in olfactory plasticity probably by regulating the expression of transcription factor mbr-1 in RIF neurons. Plays a role in the chemorepulsive response toward ascaroside pheromones mediated by the ADL sensory neurons, probably by regulating E-box motif 5'-CANNTG-3' containing target genes in the ADL neurons. Plays a role in the differentiation of the ADL sensory neurons. This is Protein lin-11 (lin-11) from Caenorhabditis elegans.